A 92-amino-acid chain; its full sequence is Small ribosomal subunit protein uS19 (92 aa).

The protein belongs to the universal ribosomal protein uS19 family.

In terms of biological role, protein S19 forms a complex with S13 that binds strongly to the 16S ribosomal RNA. This chain is Small ribosomal subunit protein uS19, found in Buchnera aphidicola subsp. Baizongia pistaciae (strain Bp).